The primary structure comprises 79 residues: Defensin-like protein 272 (79 aa).

The signal sequence occupies residues 1–24 (MSSKIKFVALLIVVISLLLNNAQS). 4 cysteine pairs are disulfide-bonded: Cys-34–Cys-77, Cys-43–Cys-63, Cys-49–Cys-75, and Cys-53–Cys-76.

It belongs to the DEFL family.

The protein resides in the secreted. This Arabidopsis thaliana (Mouse-ear cress) protein is Defensin-like protein 272.